A 73-amino-acid polypeptide reads, in one-letter code: Translation initiation factor IF-1 1 (73 aa).

Residues 1–72 (MAKEELIEFG…TKGRINFRHK (72 aa)) enclose the S1-like domain.

The protein belongs to the IF-1 family. In terms of assembly, component of the 30S ribosomal translation pre-initiation complex which assembles on the 30S ribosome in the order IF-2 and IF-3, IF-1 and N-formylmethionyl-tRNA(fMet); mRNA recruitment can occur at any time during PIC assembly.

It is found in the cytoplasm. Its function is as follows. One of the essential components for the initiation of protein synthesis. Stabilizes the binding of IF-2 and IF-3 on the 30S subunit to which N-formylmethionyl-tRNA(fMet) subsequently binds. Helps modulate mRNA selection, yielding the 30S pre-initiation complex (PIC). Upon addition of the 50S ribosomal subunit IF-1, IF-2 and IF-3 are released leaving the mature 70S translation initiation complex. This Cupriavidus metallidurans (strain ATCC 43123 / DSM 2839 / NBRC 102507 / CH34) (Ralstonia metallidurans) protein is Translation initiation factor IF-1 1.